A 431-amino-acid polypeptide reads, in one-letter code: Lipid storage droplets surface-binding protein 1 (431 aa).

Residues 397–431 (KVTGSDGGNSNHRSSRRRQDPNHYSATHNNINGVY) are disordered. The segment covering 418 to 431 (NHYSATHNNINGVY) has biased composition (polar residues).

This sequence belongs to the perilipin family.

It is found in the cytoplasm. Its subcellular location is the lipid droplet. In terms of biological role, required for normal deposition of neutral lipids in the oocyte. In Drosophila melanogaster (Fruit fly), this protein is Lipid storage droplets surface-binding protein 1.